Here is a 161-residue protein sequence, read N- to C-terminus: SsrA-binding protein (161 aa).

It belongs to the SmpB family.

The protein resides in the cytoplasm. Functionally, required for rescue of stalled ribosomes mediated by trans-translation. Binds to transfer-messenger RNA (tmRNA), required for stable association of tmRNA with ribosomes. tmRNA and SmpB together mimic tRNA shape, replacing the anticodon stem-loop with SmpB. tmRNA is encoded by the ssrA gene; the 2 termini fold to resemble tRNA(Ala) and it encodes a 'tag peptide', a short internal open reading frame. During trans-translation Ala-aminoacylated tmRNA acts like a tRNA, entering the A-site of stalled ribosomes, displacing the stalled mRNA. The ribosome then switches to translate the ORF on the tmRNA; the nascent peptide is terminated with the 'tag peptide' encoded by the tmRNA and targeted for degradation. The ribosome is freed to recommence translation, which seems to be the essential function of trans-translation. The polypeptide is SsrA-binding protein (Vibrio vulnificus (strain YJ016)).